The sequence spans 378 residues: Mating-type protein MAT-1 (378 aa).

Residues 60–117 (KARKALNAFVGFRCYYITIPMFKPWPMKKLSNLIGLLWEADPNKSLWSLMAKPWSTIR) constitute a DNA-binding region (alpha box).

The protein belongs to the MATALPHA1 family.

Its subcellular location is the nucleus. In terms of biological role, mating type proteins are sequence specific DNA-binding proteins that act as master switches in fungal differentiation by controlling gene expression in a cell type-specific fashion. Transcriptional activator that induces the transcription of alpha-specific genes. This is Mating-type protein MAT-1 (MAT1) from Cochliobolus sativus (Common root rot and spot blotch fungus).